Consider the following 78-residue polypeptide: Glycophorin-E (78 aa).

Residues 1-19 form the signal peptide; that stretch reads MYGKIIFVLLLSGIVSISA. Over 20-52 the chain is Extracellular; the sequence is SSTTGVAMHTSTSSSVTKSYISSQTNGITLINW. Residues 53–73 form a helical membrane-spanning segment; that stretch reads WAMARVIFEVMLVVVGMIILI. The Cytoplasmic segment spans residues 74 to 78; the sequence is SYCIR.

The protein belongs to the glycophorin-A family. The N-terminal extracellular domain is heavily glycosylated on serine and threonine residues. As to expression, erythrocytes.

It is found in the membrane. Functionally, this protein is a minor sialoglycoprotein in human erythrocyte membranes. The chain is Glycophorin-E (GYPE) from Homo sapiens (Human).